The chain runs to 426 residues: MKQLDVNEYMALVGRQARTASRGMARAGTAQKNRALLHIAAAVRRDAAKLKEINARDVERARANGQDAAFIDRLTLTDRAIDTMAAGLEQIAALPDPIGEISNMKFRPTGIQVGQMRVPLGVIGIIYESRPNVTVDAAALCIKSGNATILRGGSEAIESNGALAALIEEGLADAGLPANAVQVVATTDRAAVGKLITMTEYVDVIVPRGGKSLIARLIEEARVPMIKHLDGICHVYIDADADIEKAVRVCDNAKTQRYAPCNTMETLLVSRDVAARALPPLARIYQDKGVELRVCPGTRATLEAAGFGNLKDAVEADWHTEYLAPILSIRTVDGLDAAIEHINTYGSAHTDSIITENYSTGMRFLREVDSASVMINASTRFADGFEYGLGAEIGISNDKLHARGPVGLEGLTSLKYVVFGHGEIRT.

This sequence belongs to the gamma-glutamyl phosphate reductase family.

The protein localises to the cytoplasm. The catalysed reaction is L-glutamate 5-semialdehyde + phosphate + NADP(+) = L-glutamyl 5-phosphate + NADPH + H(+). It participates in amino-acid biosynthesis; L-proline biosynthesis; L-glutamate 5-semialdehyde from L-glutamate: step 2/2. Catalyzes the NADPH-dependent reduction of L-glutamate 5-phosphate into L-glutamate 5-semialdehyde and phosphate. The product spontaneously undergoes cyclization to form 1-pyrroline-5-carboxylate. This Ralstonia pickettii (strain 12J) protein is Gamma-glutamyl phosphate reductase.